The primary structure comprises 387 residues: Fetuin-B (387 aa).

A signal peptide spans 1–18 (MNVLLLLVLCTLAMGCGA). 2 consecutive Cystatin fetuin-B-type domains span residues 25 to 139 (AARP…YNCT) and 150 to 258 (MTCP…VTCS). N-linked (GlcNAc...) asparagine glycosylation is present at Asn-37. 5 disulfide bridges follow: Cys-94–Cys-105, Cys-118–Cys-138, Cys-152–Cys-155, Cys-217–Cys-225, and Cys-238–Cys-257. Asn-137 carries N-linked (GlcNAc...) asparagine glycosylation. Residues 264 to 306 (APTPRGENATVNQRPANPSKTEELQQQNTAPTNSPTKAVPKGS) are disordered. Residue Asn-271 is glycosylated (N-linked (GlcNAc...) asparagine). Over residues 272–299 (ATVNQRPANPSKTEELQQQNTAPTNSPT) the composition is skewed to polar residues. O-linked (GalNAc...) threonine glycosylation is found at Thr-292 and Thr-295. Residue Ser-320 is modified to Phosphoserine. The interval 366–387 (KEQRSAECPGPAQKGYPFILPS) is disordered.

This sequence belongs to the fetuin family. As to expression, liver and testis.

The protein localises to the secreted. In terms of biological role, protease inhibitor required for egg fertilization. Required to prevent premature zona pellucida hardening before fertilization, probably by inhibiting the protease activity of ASTL, a protease that mediates the cleavage of ZP2 and triggers zona pellucida hardening. The sequence is that of Fetuin-B (FETUB) from Bos taurus (Bovine).